The sequence spans 454 residues: UDP-N-acetylmuramoylalanine--D-glutamate ligase (454 aa).

An ATP-binding site is contributed by 118–124 (GTNGKTT).

Belongs to the MurCDEF family.

It is found in the cytoplasm. The catalysed reaction is UDP-N-acetyl-alpha-D-muramoyl-L-alanine + D-glutamate + ATP = UDP-N-acetyl-alpha-D-muramoyl-L-alanyl-D-glutamate + ADP + phosphate + H(+). Its pathway is cell wall biogenesis; peptidoglycan biosynthesis. Cell wall formation. Catalyzes the addition of glutamate to the nucleotide precursor UDP-N-acetylmuramoyl-L-alanine (UMA). This Thermosynechococcus vestitus (strain NIES-2133 / IAM M-273 / BP-1) protein is UDP-N-acetylmuramoylalanine--D-glutamate ligase.